Here is a 228-residue protein sequence, read N- to C-terminus: Probable 26S proteasome regulatory subunit p28 (228 aa).

ANK repeat units follow at residues 1–30 (MSNY…SLLL), 35–64 (DGRI…NVNL), 71–100 (SGWT…KPDL), 106–135 (QGVT…SVRI), 139–168 (FNQI…SAVN), and 173–203 (QGWT…EYDL).

As to quaternary structure, interacts with RPT3.

Its function is as follows. Acts as a chaperone during the assembly of the 26S proteasome, specifically of the 19S regulatory complex (RC) and appears to have an overlapping role with RPN14. The protein is Probable 26S proteasome regulatory subunit p28 (NAS6) of Saccharomyces cerevisiae (strain ATCC 204508 / S288c) (Baker's yeast).